We begin with the raw amino-acid sequence, 654 residues long: Probable protein phosphatase 2C 23 (654 aa).

The segment at 11 to 30 (CLTGGAGRNKKPELSILEPD) is disordered. Position 147 is a phosphoserine (serine 147). Residues 243 to 645 (DVSLESQNLQ…DDVSIVVISL (403 aa)) form the PPM-type phosphatase domain. Residues aspartate 280 and glycine 281 each contribute to the Mn(2+) site. The disordered stretch occupies residues 309–336 (DDPKTDAKSSDEADVENRDSSSEKKSKN). Mn(2+) contacts are provided by aspartate 573 and aspartate 636.

It belongs to the PP2C family. It depends on Mg(2+) as a cofactor. Mn(2+) is required as a cofactor. As to expression, expressed in seedlings, roots, leaves, stems, young inflorescences, flowers and siliques.

The protein resides in the nucleus. The catalysed reaction is O-phospho-L-seryl-[protein] + H2O = L-seryl-[protein] + phosphate. The enzyme catalyses O-phospho-L-threonyl-[protein] + H2O = L-threonyl-[protein] + phosphate. Functionally, involved in leaf development regulation. In Arabidopsis thaliana (Mouse-ear cress), this protein is Probable protein phosphatase 2C 23 (PLL4).